The primary structure comprises 233 residues: MAGALSLRCRTGCTGGCEYGHKGKCRDSSLLSKRLSEDSSRHQLLQKWTSMWRSTSEDASVADTEKARLEEAAAAAEERPLVFLCSGCRRPLGDSLSWVTSQEDTNCILLRCVSCNVSVDKEQKLSKREKENGCILETLHCTGCSLNLGYVYRCTPKNLDYKRDLFCLNVEAVESYVLGSSEKQIVSEDKELFNLESRVEIEKSLKQMEDVLQALQMKLWEVESKLSFATCKS.

3 positions are modified to phosphoserine: serine 36, serine 39, and serine 40. In terms of domain architecture, Mis18 spans 80–178 (PLVFLCSGCR…NVEAVESYVL (99 aa)). Residues cysteine 85, cysteine 88, cysteine 141, and cysteine 144 each coordinate Zn(2+). A Glycyl lysine isopeptide (Lys-Gly) (interchain with G-Cter in SUMO2) cross-link involves residue lysine 162. Position 233 is a phosphoserine (serine 233).

It belongs to the mis18 family. In terms of assembly, homodimer, and heterodimer with OIP5/MIS18B. Identified in a complex containing MIS18A, OIP5/MIS18B, MIS18BP1, RBBP7 and RBBP4.

It is found in the nucleus. Its subcellular location is the chromosome. It localises to the centromere. Required for recruitment of CENPA to centromeres and normal chromosome segregation during mitosis. This is Protein Mis18-alpha (MIS18A) from Plecturocebus moloch (Dusky titi monkey).